Consider the following 75-residue polypeptide: UPF0352 protein KPN78578_25810 (75 aa).

The protein belongs to the UPF0352 family.

In Klebsiella pneumoniae subsp. pneumoniae (strain ATCC 700721 / MGH 78578), this protein is UPF0352 protein KPN78578_25810.